The sequence spans 267 residues: 2-keto-3-deoxy-L-rhamnonate aldolase (267 aa).

Histidine 49 functions as the Proton acceptor in the catalytic mechanism. Glutamine 151 is a binding site for substrate. Glutamate 153 lines the Mg(2+) pocket. Residues alanine 178 and aspartate 179 each coordinate substrate. Aspartate 179 contacts Mg(2+).

It belongs to the HpcH/HpaI aldolase family. KDR aldolase subfamily. Homohexamer. Requires Mg(2+) as cofactor.

The enzyme catalyses 2-dehydro-3-deoxy-L-rhamnonate = (S)-lactaldehyde + pyruvate. Its function is as follows. Catalyzes the reversible retro-aldol cleavage of 2-keto-3-deoxy-L-rhamnonate (KDR) to pyruvate and lactaldehyde. The polypeptide is 2-keto-3-deoxy-L-rhamnonate aldolase (Escherichia coli (strain UTI89 / UPEC)).